The following is a 653-amino-acid chain: Fructose-1,6-bisphosphatase class 3 (653 aa).

Belongs to the FBPase class 3 family. Requires Mn(2+) as cofactor.

It carries out the reaction beta-D-fructose 1,6-bisphosphate + H2O = beta-D-fructose 6-phosphate + phosphate. It participates in carbohydrate biosynthesis; gluconeogenesis. The polypeptide is Fructose-1,6-bisphosphatase class 3 (Listeria innocua serovar 6a (strain ATCC BAA-680 / CLIP 11262)).